A 178-amino-acid polypeptide reads, in one-letter code: Adenine phosphoribosyltransferase (178 aa).

This sequence belongs to the purine/pyrimidine phosphoribosyltransferase family. Homodimer.

It is found in the cytoplasm. It catalyses the reaction AMP + diphosphate = 5-phospho-alpha-D-ribose 1-diphosphate + adenine. Its pathway is purine metabolism; AMP biosynthesis via salvage pathway; AMP from adenine: step 1/1. Its function is as follows. Catalyzes a salvage reaction resulting in the formation of AMP, that is energically less costly than de novo synthesis. The protein is Adenine phosphoribosyltransferase of Erythrobacter litoralis (strain HTCC2594).